We begin with the raw amino-acid sequence, 609 residues long: tRNA uridine 5-carboxymethylaminomethyl modification enzyme MnmG (609 aa).

Residues 11 to 16, Val-123, and Thr-178 each bind FAD; that span reads GAGHAG. 270-284 is a binding site for NAD(+); that stretch reads GPRYCPSIEDKVVRF. Gln-367 is an FAD binding site.

Belongs to the MnmG family. As to quaternary structure, homodimer. Heterotetramer of two MnmE and two MnmG subunits. FAD is required as a cofactor.

It localises to the cytoplasm. Its function is as follows. NAD-binding protein involved in the addition of a carboxymethylaminomethyl (cmnm) group at the wobble position (U34) of certain tRNAs, forming tRNA-cmnm(5)s(2)U34. The chain is tRNA uridine 5-carboxymethylaminomethyl modification enzyme MnmG from Mycoplasmopsis synoviae (strain 53) (Mycoplasma synoviae).